We begin with the raw amino-acid sequence, 105 residues long: Small ribosomal subunit protein uS10 (105 aa).

This sequence belongs to the universal ribosomal protein uS10 family. Part of the 30S ribosomal subunit.

Involved in the binding of tRNA to the ribosomes. The protein is Small ribosomal subunit protein uS10 of Aster yellows witches'-broom phytoplasma (strain AYWB).